A 164-amino-acid chain; its full sequence is Interferon gamma (164 aa).

An N-terminal signal peptide occupies residues 1–19 (MTCQTYCLFVLSVIMIYFG). Residues asparagine 42, asparagine 61, and asparagine 95 are each glycosylated (N-linked (GlcNAc...) asparagine).

It belongs to the type II (or gamma) interferon family. In terms of assembly, homodimer.

It is found in the secreted. Functionally, produced by lymphocytes activated by specific antigens or mitogens. IFN-gamma, in addition to having antiviral activity, has important immunoregulatory functions. It is a potent activator of macrophages, it has antiproliferative effects on transformed cells and it can potentiate the antiviral and antitumor effects of the type I interferons. This is Interferon gamma (IFNG) from Anas platyrhynchos (Mallard).